We begin with the raw amino-acid sequence, 148 residues long: Transcription antitermination protein NusB (148 aa).

It belongs to the NusB family.

Functionally, involved in transcription antitermination. Required for transcription of ribosomal RNA (rRNA) genes. Binds specifically to the boxA antiterminator sequence of the ribosomal RNA (rrn) operons. This is Transcription antitermination protein NusB from Novosphingobium aromaticivorans (strain ATCC 700278 / DSM 12444 / CCUG 56034 / CIP 105152 / NBRC 16084 / F199).